A 21-amino-acid chain; its full sequence is Fibrinogen beta chain (21 aa).

Residue Gln1 is modified to Pyrrolidone carboxylic acid. A Sulfotyrosine modification is found at Tyr6.

As to quaternary structure, heterohexamer; disulfide linked. Contains 2 sets of 3 non-identical chains (alpha, beta and gamma). The 2 heterotrimers are in head to head conformation with the N-termini in a small central domain. Post-translationally, conversion of fibrinogen to fibrin is triggered by thrombin, which cleaves fibrinopeptides A and B from alpha and beta chains, and thus exposes the N-terminal polymerization sites responsible for the formation of the soft clot.

It localises to the secreted. Its function is as follows. Cleaved by the protease thrombin to yield monomers which, together with fibrinogen alpha (FGA) and fibrinogen gamma (FGG), polymerize to form an insoluble fibrin matrix. Fibrin has a major function in hemostasis as one of the primary components of blood clots. In addition, functions during the early stages of wound repair to stabilize the lesion and guide cell migration during re-epithelialization. Was originally thought to be essential for platelet aggregation, based on in vitro studies using anticoagulated blood. However subsequent studies have shown that it is not absolutely required for thrombus formation in vivo. Enhances expression of SELP in activated platelets. Maternal fibrinogen is essential for successful pregnancy. Fibrin deposition is also associated with infection, where it protects against IFNG-mediated hemorrhage. May also facilitate the antibacterial immune response via both innate and T-cell mediated pathways. The sequence is that of Fibrinogen beta chain (FGB) from Rangifer tarandus (Reindeer).